Reading from the N-terminus, the 404-residue chain is Ubiquitin-like modifier-activating enzyme 5 (404 aa).

Residue serine 45 is modified to Phosphoserine. Residues glycine 83, aspartate 104, lysine 127, asparagine 150, and asparagine 184 each contribute to the ATP site. Zn(2+) contacts are provided by cysteine 226 and cysteine 229. The Glycyl thioester intermediate role is filled by cysteine 250. The Zn(2+) site is built by cysteine 303 and cysteine 308. Positions 334-346 (IIHEDNEWGIELV) match the UFM1-interacting sequence (UIS) motif. Positions 347-377 (SEISEEELKKSSGPIPDLPEGIIVAYTVPQK) are linker. Phosphoserine is present on residues serine 358 and serine 393. The short motif at 389 to 404 (DSGESLEDLMAKMKNI) is the UFC1-binding sequence (UFC) element.

This sequence belongs to the ubiquitin-activating E1 family. UBA5 subfamily. In terms of assembly, homodimer; homodimerization is required for UFM1 activation. Interacts (via UIS motif) with UFM1; binds UFM1 via a trans-binding mechanism in which UFM1 interacts with distinct sites in both subunits of the UBA5 homodimer. Interacts (via C-terminus) with UFC1. Interacts (via UIS motif) with GABARAPL2 and, with lower affinity, with GABARAP and GABARAPL1.

It is found in the cytoplasm. The protein localises to the nucleus. It localises to the endoplasmic reticulum membrane. The protein resides in the golgi apparatus. Functionally, E1-like enzyme which specifically catalyzes the first step in ufmylation. Activates UFM1 by first adenylating its C-terminal glycine residue with ATP, and thereafter linking this residue to the side chain of a cysteine residue in E1, yielding a UFM1-E1 thioester and free AMP. Activates UFM1 via a trans-binding mechanism, in which UFM1 interacts with distinct sites in both subunits of the UBA5 homodimer. Trans-binding also promotes stabilization of the UBA5 homodimer, and enhances ATP-binding. Transfer of UFM1 from UBA5 to the E2-like enzyme UFC1 also takes place using a trans mechanism. Ufmylation plays a key role in various processes, such as ribosome recycling, response to DNA damage, interferon response or reticulophagy (also called ER-phagy). Ufmylation is essential for erythroid differentiation of both megakaryocytes and erythrocytes. This is Ubiquitin-like modifier-activating enzyme 5 from Bos taurus (Bovine).